The chain runs to 628 residues: Rac GTPase-activating protein 1 (628 aa).

Met-1 carries the post-translational modification N-acetylmethionine. A coiled-coil region spans residues 33–110 (QVVKDFEDFR…IQLIRDILMC (78 aa)). Residues 107–286 (ILMCDTSGSI…GTPQNTGGMR (180 aa)) are interaction with SLC26A8. Phosphoserine; by PLK1 is present on Ser-150. Residue Ser-155 is modified to Phosphoserine. Ser-158 bears the Phosphoserine; by PLK1 mark. A Phosphothreonine modification is found at Thr-162. 2 positions are modified to phosphoserine; by PLK1: Ser-165 and Ser-171. The disordered stretch occupies residues 179–201 (KKREKRRSNSRQFIDGPPGPVKK). Phosphoserine is present on residues Ser-204, Ser-207, and Ser-215. Residues 242-284 (SWTRSRGKSGPLQPVNSDSALNSRPLEPRTDTDNLGTPQNTGG) form a disordered region. Residue Lys-249 forms a Glycyl lysine isopeptide (Lys-Gly) (interchain with G-Cter in SUMO2) linkage. Ser-258 is subject to Phosphoserine. Polar residues predominate over residues 274 to 283 (DNLGTPQNTG). Residues 287–336 (LHDFVSKTVIKPESCVPCGKRIKFGKLSLKCRDCRLVSHPECRDRCPLPC) form a Phorbol-ester/DAG-type zinc finger. Phosphothreonine is present on Thr-343. Residues 350-540 (GMLADFVSQA…RLLSLPLEYW (191 aa)) form the Rho-GAP domain. At Ser-388 the chain carries Phosphoserine; by AURKB. Residue Lys-405 forms a Glycyl lysine isopeptide (Lys-Gly) (interchain with G-Cter in SUMO2) linkage. A Phosphoserine; by AURKB modification is found at Ser-411. Residues Thr-564, Thr-577, Thr-585, and Thr-602 each carry the phosphothreonine modification.

In terms of assembly, heterotetramer of two molecules each of RACGAP1 and KIF23. Found in the centralspindlin complex. Associates with alpha-, beta- and gamma-tubulin and microtubules. Interacts via its Rho-GAP domain with RND2. Associates with AURKB during M phase. Interacts via its Rho-GAP domain and basic region with PRC1. The interaction with PRC1 inhibits its GAP activity towards CDC42 in vitro, which may be required for maintaining normal spindle morphology. Interacts with SLC26A8 via its N-terminus. Interacts with ECT2; the interaction is direct, occurs at anaphase and during cytokinesis in a microtubule-dependent manner, is enhanced by phosphorylation by PLK1 and phosphorylation at Ser-165 plays a major role in mediating binding. Interacts with RAB11FIP3; the interaction occurs at late telophase. Interacts with KIF23; the interaction is direct. Post-translationally, phosphorylated at multiple sites in the midbody during cytokinesis. Phosphorylation by AURKB on Ser-388 at the midbody is, at least in part, responsible for exerting its latent GAP activity towards RhoA. Phosphorylation on multiple serine residues by PLK1 enhances its association with ECT2 and is critical for cleavage furrow formation. Phosphorylation on Ser-165 plays a major role in mediating interaction with ECT2. Phosphorylation on Ser-158 does not appear to contribute to binding to ECT2. Highly expressed in testis, thymus and spleen and weakly expressed in brain, heart, skeletal muscle and kidney. In testis, expression is restricted to germ cells with the highest levels of expression found in spermatocytes. Not detected in adult liver. Also expressed in fetal liver and in several hematopoietic cell lines.

The protein localises to the nucleus. The protein resides in the cytoplasm. It is found in the cytoskeleton. Its subcellular location is the spindle. It localises to the cytoplasmic vesicle. The protein localises to the secretory vesicle. The protein resides in the acrosome. It is found in the cleavage furrow. Its subcellular location is the midbody. It localises to the midbody ring. The protein localises to the cell membrane. Functionally, component of the centralspindlin complex that serves as a microtubule-dependent and Rho-mediated signaling required for the myosin contractile ring formation during the cell cycle cytokinesis. Required for proper attachment of the midbody to the cell membrane during cytokinesis. Sequentially binds to ECT2 and RAB11FIP3 which regulates cleavage furrow ingression and abscission during cytokinesis. Plays key roles in controlling cell growth and differentiation of hematopoietic cells through mechanisms other than regulating Rac GTPase activity. Has a critical role in erythropoiesis. Also involved in the regulation of growth-related processes in adipocytes and myoblasts. May be involved in regulating spermatogenesis and in the RACGAP1 pathway in neuronal proliferation. Shows strong GAP (GTPase activation) activity towards CDC42 and RAC1 and less towards RHOA. Essential for the early stages of embryogenesis. May play a role in regulating cortical activity through RHOA during cytokinesis. May participate in the regulation of sulfate transport in male germ cells. This is Rac GTPase-activating protein 1 from Mus musculus (Mouse).